Reading from the N-terminus, the 127-residue chain is Large ribosomal subunit protein bL20 (127 aa).

The protein belongs to the bacterial ribosomal protein bL20 family.

Functionally, binds directly to 23S ribosomal RNA and is necessary for the in vitro assembly process of the 50S ribosomal subunit. It is not involved in the protein synthesizing functions of that subunit. The sequence is that of Large ribosomal subunit protein bL20 (rplT) from Mycoplasma pneumoniae (strain ATCC 29342 / M129 / Subtype 1) (Mycoplasmoides pneumoniae).